Reading from the N-terminus, the 245-residue chain is Ribosomal RNA small subunit methyltransferase G (245 aa).

Residues Gly79, Phe84, 130 to 131 (AE), and Arg150 each bind S-adenosyl-L-methionine.

Belongs to the methyltransferase superfamily. RNA methyltransferase RsmG family.

It is found in the cytoplasm. Functionally, specifically methylates the N7 position of a guanine in 16S rRNA. This chain is Ribosomal RNA small subunit methyltransferase G, found in Limosilactobacillus fermentum (strain NBRC 3956 / LMG 18251) (Lactobacillus fermentum).